A 285-amino-acid chain; its full sequence is Probable endonuclease 4 (285 aa).

The Zn(2+) site is built by His-69, His-109, Glu-145, Asp-179, His-182, His-216, Asp-229, His-231, and Glu-261.

Belongs to the AP endonuclease 2 family. It depends on Zn(2+) as a cofactor.

The enzyme catalyses Endonucleolytic cleavage to 5'-phosphooligonucleotide end-products.. Endonuclease IV plays a role in DNA repair. It cleaves phosphodiester bonds at apurinic or apyrimidinic (AP) sites, generating a 3'-hydroxyl group and a 5'-terminal sugar phosphate. In Salmonella newport (strain SL254), this protein is Probable endonuclease 4.